Consider the following 154-residue polypeptide: Stigma-specific STIG1-like protein 3 (154 aa).

Positions 1 to 23 (MGHRNTVLTILLTISIAIMVLIA) are cleaved as a signal peptide.

Belongs to the STIG1 family.

The chain is Stigma-specific STIG1-like protein 3 from Arabidopsis thaliana (Mouse-ear cress).